A 263-amino-acid chain; its full sequence is Endonuclease 8 (263 aa).

Pro2 serves as the catalytic Schiff-base intermediate with DNA. Glu3 functions as the Proton donor in the catalytic mechanism. Lys53 (proton donor; for beta-elimination activity) is an active-site residue. Gln70, Arg125, and Asn169 together coordinate DNA. The FPG-type zinc finger occupies 229–263 (KVFHRDGELCERCGGIIEKTTLSSRPFYWCPGCQH). Catalysis depends on Arg253, which acts as the Proton donor; for delta-elimination activity.

The protein belongs to the FPG family. The cofactor is Zn(2+).

It carries out the reaction 2'-deoxyribonucleotide-(2'-deoxyribose 5'-phosphate)-2'-deoxyribonucleotide-DNA = a 3'-end 2'-deoxyribonucleotide-(2,3-dehydro-2,3-deoxyribose 5'-phosphate)-DNA + a 5'-end 5'-phospho-2'-deoxyribonucleoside-DNA + H(+). Functionally, involved in base excision repair of DNA damaged by oxidation or by mutagenic agents. Acts as a DNA glycosylase that recognizes and removes damaged bases. Has a preference for oxidized pyrimidines, such as thymine glycol, 5,6-dihydrouracil and 5,6-dihydrothymine. Has AP (apurinic/apyrimidinic) lyase activity and introduces nicks in the DNA strand. Cleaves the DNA backbone by beta-delta elimination to generate a single-strand break at the site of the removed base with both 3'- and 5'-phosphates. In Escherichia coli O157:H7, this protein is Endonuclease 8.